The following is a 515-amino-acid chain: 2-isopropylmalate synthase (515 aa).

One can recognise a Pyruvate carboxyltransferase domain in the interval 5 to 268 (VIIFDTTLRD…VCGIDASQIV (264 aa)). Positions 14, 202, 204, and 239 each coordinate Mn(2+). The interval 394 to 515 (HFISLSQHSE…QAKLNAQMAP (122 aa)) is regulatory domain.

Belongs to the alpha-IPM synthase/homocitrate synthase family. LeuA type 1 subfamily. In terms of assembly, homodimer. The cofactor is Mn(2+).

It localises to the cytoplasm. The catalysed reaction is 3-methyl-2-oxobutanoate + acetyl-CoA + H2O = (2S)-2-isopropylmalate + CoA + H(+). The protein operates within amino-acid biosynthesis; L-leucine biosynthesis; L-leucine from 3-methyl-2-oxobutanoate: step 1/4. Functionally, catalyzes the condensation of the acetyl group of acetyl-CoA with 3-methyl-2-oxobutanoate (2-ketoisovalerate) to form 3-carboxy-3-hydroxy-4-methylpentanoate (2-isopropylmalate). This is 2-isopropylmalate synthase from Polynucleobacter asymbioticus (strain DSM 18221 / CIP 109841 / QLW-P1DMWA-1) (Polynucleobacter necessarius subsp. asymbioticus).